A 179-amino-acid polypeptide reads, in one-letter code: Large ribosomal subunit protein uL6 (179 aa).

It belongs to the universal ribosomal protein uL6 family. As to quaternary structure, part of the 50S ribosomal subunit.

Functionally, this protein binds to the 23S rRNA, and is important in its secondary structure. It is located near the subunit interface in the base of the L7/L12 stalk, and near the tRNA binding site of the peptidyltransferase center. In Mycoplasmopsis pulmonis (strain UAB CTIP) (Mycoplasma pulmonis), this protein is Large ribosomal subunit protein uL6.